We begin with the raw amino-acid sequence, 202 residues long: Large ribosomal subunit protein bL25 (202 aa).

Belongs to the bacterial ribosomal protein bL25 family. CTC subfamily. In terms of assembly, part of the 50S ribosomal subunit; part of the 5S rRNA/L5/L18/L25 subcomplex. Contacts the 5S rRNA. Binds to the 5S rRNA independently of L5 and L18.

Its function is as follows. This is one of the proteins that binds to the 5S RNA in the ribosome where it forms part of the central protuberance. In Rickettsia bellii (strain OSU 85-389), this protein is Large ribosomal subunit protein bL25.